The following is a 299-amino-acid chain: Putative ankyrin repeat protein R864 (299 aa).

7 ANK repeats span residues 78–107 (SLNK…NIES), 108–137 (NNNY…NIKS), 139–167 (NNRV…DIRS), 168–197 (NDDY…DIRS), 199–227 (YYYI…DIRA), 228–257 (YNNC…DIRN), and 258–287 (DNDY…DIKT).

The polypeptide is Putative ankyrin repeat protein R864 (Acanthamoeba polyphaga mimivirus (APMV)).